Reading from the N-terminus, the 87-residue chain is Small polypeptide ROTUNDIFOLIA LIKE 2 (87 aa).

A helical membrane pass occupies residues 19–35; it reads LIPHTSHYILQLVYLHL. The interval 56-87 is required for DVL/RTFL small polypeptide activity; that stretch reads GQMGRLNRAFREKRARFYIFRRCVIMLLRWSD.

Belongs to the DVL/RTFL small polypeptides family.

It is found in the cell membrane. Small polypeptide acting as a regulatory molecule which coordinates cellular responses required for differentiation, growth and development, probably by restricting polar cell proliferation in lateral organs. This Oryza sativa subsp. japonica (Rice) protein is Small polypeptide ROTUNDIFOLIA LIKE 2.